The chain runs to 105 residues: Small ribosomal subunit protein uS10 (105 aa).

This sequence belongs to the universal ribosomal protein uS10 family. As to quaternary structure, part of the 30S ribosomal subunit.

Involved in the binding of tRNA to the ribosomes. The polypeptide is Small ribosomal subunit protein uS10 (Maridesulfovibrio salexigens (strain ATCC 14822 / DSM 2638 / NCIMB 8403 / VKM B-1763) (Desulfovibrio salexigens)).